The following is a 70-amino-acid chain: MFPRSGLGLAVAAAVVAYLVLLLAQQLYMSNSSQCTIVITGESVSVVGCVYSEAFIELVKGLKPYYHPLG.

Over 1 to 4 (MFPR) the chain is Lumenal. Residues 5–25 (SGLGLAVAAAVVAYLVLLLAQ) form a helical membrane-spanning segment. Residues 26 to 70 (QLYMSNSSQCTIVITGESVSVVGCVYSEAFIELVKGLKPYYHPLG) are Cytoplasmic-facing.

The protein belongs to the Tymovirales TGBp3 protein family.

Its subcellular location is the host endoplasmic reticulum membrane. In terms of biological role, plays a role in viral cell-to-cell propagation, by facilitating genome transport to neighboring plant cells through plasmosdesmata. May induce the formation of granular vesicles derived from the Endoplasmic reticulum, which align on actin filaments. In Crataegus (hawthorn), this protein is Movement protein TGBp3.